A 126-amino-acid chain; its full sequence is Regulatory protein MgsR (126 aa).

A disulfide bond links cysteine 13 and cysteine 16.

This sequence belongs to the ArsC family.

The protein localises to the cytoplasm. Its activity is regulated as follows. Activity is controlled at multiple levels. Regulation includes a positive autoregulatory loop on mgsR transcription and a post-translational redox-sensitive activation step by an intramolecular disulfide bond formation in response to ethanol stress. In addition, protein stability is strictly controlled by rapid proteolytic degradation by the ClpXP and ClpCP proteases. The McsB protein-arginine kinase might serve as a proteolytic adapter for the ClpX ATPase in the degradation mechanism of MgsR. In terms of biological role, regulates transcription of a subregulon within the general stress response. Exerts positive and negative effects in response to ethanol stress. This is Regulatory protein MgsR from Bacillus subtilis (strain 168).